The sequence spans 282 residues: Methyltransferase tpcH (282 aa).

Belongs to the class I-like SAM-binding methyltransferase superfamily. Specifically expressed in conidia.

Its pathway is secondary metabolite biosynthesis. Its function is as follows. Methyltransferase; part of the gene cluster that mediates the biosynthesis of trypacidin, a mycotoxin with antiprotozoal activity and that plays a role in the infection process. The pathway begins with the synthesis of atrochrysone thioester by the polyketide synthase (PKS) tpcC. The atrochrysone carboxyl ACP thioesterase tpcB then breaks the thioester bond and releases the atrochrysone carboxylic acid from tpcC. The decarboxylase tpcK converts atrochrysone carboxylic acid to atrochrysone which is further reduced into emodin anthrone. The next step is performed by the emodin anthrone oxygenase tpcL that catalyzes the oxidation of emodinanthrone to emodin. Emodin O-methyltransferase encoded by tpcA catalyzes methylation of the 8-hydroxy group of emodin to form questin. Ring cleavage of questin by questin oxidase tpcI leads to desmethylsulochrin via several intermediates including questin epoxide. Another methylation step catalyzed by tpcM leads to the formation of sulochrin which is further converted to monomethylsulfochrin by tpcH. Finally, the tpcJ catalyzes the conversion of monomethylsulfochrin to trypacidin. Trypacidin is toxic for human pulmonary and bronchial epithelial cells by initiating the intracellular formation of nitric oxide (NO) and hydrogen peroxide (H(2)O(2)), thus triggering host necrotic cell death. The trypacidin pathway is also able to produce endocrocin via a distinct route from the endocrocin Enc pathway. This chain is Methyltransferase tpcH, found in Aspergillus fumigatus (strain ATCC MYA-4609 / CBS 101355 / FGSC A1100 / Af293) (Neosartorya fumigata).